The sequence spans 191 residues: UPF0312 protein Shewmr7_1249 (191 aa).

The signal sequence occupies residues Met1 to Ala22.

This sequence belongs to the UPF0312 family. Type 1 subfamily.

It localises to the periplasm. The polypeptide is UPF0312 protein Shewmr7_1249 (Shewanella sp. (strain MR-7)).